The following is a 2768-amino-acid chain: MALVLEIFTLLASICWVSANIFEYQVDAQPLRPCELQRETAFLKQADYVPQCAEDGSFQTVQCQNDGRSCWCVGANGSEVLGSRQPGRPVACLSFCQLQKQQILLSGYINSTDTSYLPQCQDSGDYAPVQCDVQQVQCWCVDAEGMEVYGTRQLGRPKRCPRSCEIRNRRLLHGVGDKSPPQCSAEGEFMPVQCKFVNTTDMMIFDLVHSYNRFPDAFVTFSSFQRRFPEVSGYCHCADSQGRELAETGLELLLDEIYDTIFAGLDLPSTFTETTLYRILQRRFLAVQSVISGRFRCPTKCEVERFTATSFGHPYVPSCRRNGDYQAVQCQTEGPCWCVDAQGKEMHGTRQQGEPPSCAEGQSCASERQQALSRLYFGTSGYFSQHDLFSSPEKRWASPRVARFATSCPPTIKELFVDSGLLRPMVEGQSQQFSVSENLLKEAIRAIFPSRGLARLALQFTTNPKRLQQNLFGGKFLVNVGQFNLSGALGTRGTFNFSQFFQQLGLASFLNGGRQEDLAKPLSVGLDSNSSTGTPEAAKKDGTMNKPTVGSFGFEINLQENQNALKFLASLLELPEFLLFLQHAISVPEDVARDLGDVMETVLSSQTCEQTPERLFVPSCTTEGSYEDVQCFSGECWCVNSWGKELPGSRVRGGQPRCPTDCEKQRARMQSLMGSQPAGSTLFVPACTSEGHFLPVQCFNSECYCVDAEGQAIPGTRSAIGKPKKCPTPCQLQSEQAFLRTVQALLSNSSMLPTLSDTYIPQCSTDGQWRQVQCNGPPEQVFELYQRWEAQNKGQDLTPAKLLVKIMSYREAASGNFSLFIQSLYEAGQQDVFPVLSQYPSLQDVPLAALEGKRPQPRENILLEPYLFWQILNGQLSQYPGSYSDFSTPLAHFDLRNCWCVDEAGQELEGMRSEPSKLPTCPGSCEEAKLRVLQFIRETEEIVSASNSSRFPLGESFLVAKGIRLRNEDLGLPPLFPPREAFAEQFLRGSDYAIRLAAQSTLSFYQRRRFSPDDSAGASALLRSGPYMPQCDAFGSWEPVQCHAGTGHCWCVDEKGGFIPGSLTARSLQIPQCPTTCEKSRTSGLLSSWKQARSQENPSPKDLFVPACLETGEYARLQASGAGTWCVDPASGEELRPGSSSSAQCPSLCNVLKSGVLSRRVSPGYVPACRAEDGGFSPVQCDQAQGSCWCVMDSGEEVPGTRVTGGQPACESPRCPLPFNASEVVGGTILCETISGPTGSAMQQCQLLCRQGSWSVFPPGPLICSLESGRWESQLPQPRACQRPQLWQTIQTQGHFQLQLPPGKMCSADYADLLQTFQVFILDELTARGFCQIQVKTFGTLVSIPVCNNSSVQVGCLTRERLGVNVTWKSRLEDIPVASLPDLHDIERALVGKDLLGRFTDLIQSGSFQLHLDSKTFPAETIRFLQGDHFGTSPRTWFGCSEGFYQVLTSEASQDGLGCVKCPEGSYSQDEECIPCPVGFYQEQAGSLACVPCPVGRTTISAGAFSQTHCVTDCQRNEAGLQCDQNGQYRASQKDRGSGKAFCVDGEGRRLPWWETEAPLEDSQCLMMQKFEKVPESKVIFDANAPVAVRSKVPDSEFPVMQCLTDCTEDEACSFFTVSTTEPEISCDFYAWTSDNVACMTSDQKRDALGNSKATSFGSLRCQVKVRSHGQDSPAVYLKKGQGSTTTLQKRFEPTGFQNMLSGLYNPIVFSASGANLTDAHLFCLLACDRDLCCDGFVLTQVQGGAIICGLLSSPSVLLCNVKDWMDPSEAWANATCPGVTYDQESHQVILRLGDQEFIKSLTPLEGTQDTFTNFQQVYLWKDSDMGSRPESMGCRKDTVPRPASPTEAGLTTELFSPVDLNQVIVNGNQSLSSQKHWLFKHLFSAQQANLWCLSRCVQEHSFCQLAEITESASLYFTCTLYPEAQVCDDIMESNAQGCRLILPQMPKALFRKKVILEDKVKNFYTRLPFQKLMGISIRNKVPMSEKSISNGFFECERRCDADPCCTGFGFLNVSQLKGGEVTCLTLNSLGIQMCSEENGGAWRILDCGSPDIEVHTYPFGWYQKPIAQNNAPSFCPLVVLPSLTEKVSLDSWQSLALSSVVVDPSIRHFDVAHVSTAATSNFSAVRDLCLSECSQHEACLITTLQTQPGAVRCMFYADTQSCTHSLQGQNCRLLLREEATHIYRKPGISLLSYEASVPSVPISTHGRLLGRSQAIQVGTSWKQVDQFLGVPYAAPPLAERRFQAPEPLNWTGSWDASKPRASCWQPGTRTSTSPGVSEDCLYLNVFIPQNVAPNASVLVFFHNTMDREESEGWPAIDGSFLAAVGNLIVVTASYRVGVFGFLSSGSGEVSGNWGLLDQVAALTWVQTHIRGFGGDPRRVSLAADRGGADVASIHLLTARATNSQLFRRAVLMGGSALSPAAVISHERAQQQAIALAKEVSCPMSSSQEVVSCLRQKPANVLNDAQTKLLAVSGPFHYWGPVIDGHFLREPPARALKRSLWVEVDLLIGSSQDDGLINRAKAVKQFEESRGRTSSKTAFYQALQNSLGGEDSDARVEAAATWYYSLEHSTDDYASFSRALENATRDYFIICPIIDMASAWAKRARGNVFMYHAPENYGHGSLELLADVQFALGLPFYPAYEGQFSLEEKSLSLKIMQYFSHFIRSGNPNYPYEFSRKVPTFATPWPDFVPRAGGENYKEFSELLPNRQGLKKADCSFWSKYISSLKTSADGAKGGQSAESEEEELTAGSGLREDLLSLQEPGSKTYSK.

An N-terminal signal peptide occupies residues 1–19 (MALVLEIFTLLASICWVSA). An Iodotyrosine; alternate modification is found at Y24. Residue Y24 is modified to Sulfotyrosine; alternate. Y24 carries the post-translational modification Thyroxine; alternate. Y24 is subject to Triiodothyronine; alternate. Thyroglobulin type-1 domains follow at residues 31–92 (LRPC…PVAC), 93–160 (LSFC…PKRC), 161–297 (PRSC…RFRC), and 298–358 (PTKC…PPSC). 18 cysteine pairs are disulfide-bonded: C34-C52, C63-C70, C72-C92, C96-C120, C131-C138, C140-C160, C164-C183, C194-C235, C237-C297, C301-C319, C330-C336, C338-C358, C364-C620, C408-C608, C631-C636, C638-C658, C662-C687, and C698-C703. An N-linked (GlcNAc...) asparagine glycan is attached at N76. Y108 carries the post-translational modification Iodotyrosine. Residue N110 is glycosylated (N-linked (GlcNAc...) asparagine). An Iodotyrosine; alternate modification is found at Y149. Position 149 is a diiodotyrosine; alternate (Y149). N198 is a glycosylation site (N-linked (GlcNAc...) asparagine). Iodotyrosine occurs at positions 234 and 258. N484 and N529 each carry an N-linked (GlcNAc...) asparagine glycan. The disordered stretch occupies residues 521 to 545 (PLSVGLDSNSSTGTPEAAKKDGTMN). Thyroglobulin type-1 domains lie at 605-658 (SQTC…QPRC), 659-726 (PTDC…PKKC), 727-921 (PTPC…LPTC), 922-1073 (PGSC…IPQC), 1074-1145 (PTTC…SAQC), and 1146-1210 (PSLC…QPAC). An Iodotyrosine; alternate modification is found at Y704. Y704 is subject to Thyroxine; alternate. Position 704 is a triiodothyronine; alternate (Y704). Y704 is subject to Diiodotyrosine; alternate. Intrachain disulfides connect C705/C726, C730/C763, C774/C898, C900/C921, C925/C1031, C1042/C1049, C1051/C1073, C1077/C1108, C1126/C1145, C1149/C1169, C1181/C1188, C1190/C1210, C1215/C1264, C1231/C1245, C1306/C1356, and C1331/C1347. A glycan (N-linked (GlcNAc...) asparagine) is linked at N748. An Iodotyrosine modification is found at Y785. Residue N816 is glycosylated (N-linked (GlcNAc...) asparagine). Y866 carries the iodotyrosine; alternate modification. Y866 carries the post-translational modification Diiodotyrosine; alternate. Diiodotyrosine is present on Y883. N-linked (GlcNAc...) asparagine glycosylation occurs at N947. At Y992 the chain carries Iodotyrosine; alternate. At Y992 the chain carries Diiodotyrosine; alternate. A glycan (N-linked (GlcNAc...) asparagine) is linked at N1220. Iodotyrosine is present on Y1310. Y1310 carries the post-translational modification Thyroxine. N-linked (GlcNAc...) asparagine glycosylation is found at N1348, N1349, and N1365. 9 disulfide bridges follow: C1440–C1459, C1462–C1473, C1476–C1490, C1493–C1510, C1514–C1523, C1543–C1565, C1603–C1627, C1607–C1613, and C1639–C1662. 3 Type II repeats span residues 1456-1469 (GLGC…SYSQ), 1470-1486 (DEEC…EQAG), and 1487-1503 (SLAC…ISAG). An Iodotyrosine; alternate modification is found at Y1467. Y1467 is subject to Diiodotyrosine; alternate. One can recognise a Thyroglobulin type-1 11 domain in the interval 1511–1565 (VTDCQRNEAGLQCDQNGQYRASQKDRGSGKAFCVDGEGRRLPWWETEAPLEDSQC). A Type IIIA repeat occupies 1603–1723 (CLTDCTEDEA…GANLTDAHLF (121 aa)). Residue N1716 is glycosylated (N-linked (GlcNAc...) asparagine). Disulfide bonds link C1724–C1749, C1728–C1734, C1733–C1835, and C1760–C1777. The stretch at 1724-1892 (CLLACDRDLC…LFSAQQANLW (169 aa)) is one Type IIIB repeat. N1774 and N1869 each carry an N-linked (GlcNAc...) asparagine glycan. Disulfide bonds link C1893/C1919, C1897/C1904, C1928/C1939, C1996/C2024, C2000/C2006, C2005/C2076, and C2035/C2048. The Type IIIA repeat unit spans residues 1893 to 1995 (CLSRCVQEHS…EKSISNGFFE (103 aa)). The stretch at 1996-2129 (CERRCDADPC…TSNFSAVRDL (134 aa)) is one Type IIIB repeat. An N-linked (GlcNAc...) asparagine glycan is attached at N2013. N-linked (GlcNAc...) asparagine glycosylation is present at N2122. 3 cysteine pairs are disulfide-bonded: C2130-C2154, C2134-C2140, and C2163-C2172. The Type IIIA repeat unit spans residues 2130–2187 (CLSECSQHEACLITTLQTQPGAVRCMFYADTQSCTHSLQGQNCRLLLREEATHIYRKP). Iodotyrosine is present on Y2184. The cholinesterase-like (ChEL) stretch occupies residues 2188–2768 (GISLLSYEAS…QEPGSKTYSK (581 aa)). The N-linked (GlcNAc...) asparagine glycan is linked to N2250. An intrachain disulfide couples C2264 to C2281. N2295 carries an N-linked (GlcNAc...) asparagine glycan. C2442 and C2453 are joined by a disulfide. Y2540 carries the post-translational modification Iodotyrosine. Iodotyrosine; alternate is present on Y2573. Y2573 is subject to Thyroxine; alternate. Y2573 is modified (triiodothyronine; alternate). Y2573 is modified (diiodotyrosine; alternate). Residue N2582 is glycosylated (N-linked (GlcNAc...) asparagine). Iodotyrosine occurs at positions 2587 and 2617. An intrachain disulfide couples C2591 to C2715. Y2697 carries the diiodotyrosine modification. A disordered region spans residues 2727-2768 (TSADGAKGGQSAESEEEELTAGSGLREDLLSLQEPGSKTYSK). O-linked (Xyl...) (chondroitin sulfate) serine glycosylation is present at S2749. Residue Y2766 is modified to Iodotyrosine; alternate. Y2766 bears the Thyroxine; alternate mark. The residue at position 2766 (Y2766) is a Triiodothyronine; alternate. Y2766 is subject to Diiodotyrosine; alternate.

Belongs to the type-B carboxylesterase/lipase family. As to quaternary structure, monomer. Homodimer (via ChEL region); occurs in the endoplasmic reticulum and is required for export to the Golgi apparatus. Homooligomer; disulfide-linked; stored in this form in the thyroid follicle lumen. In terms of processing, iodinated on tyrosine residues by TPO. There are 4 pairs of iodinated tyrosines used for coupling: acceptor Tyr-24 is coupled to donor Tyr-149 or Tyr-234, acceptor Tyr-2573 is coupled to donor Tyr-2540, acceptor Tyr-2766 in monomer 1 is coupled to donor Tyr-2766 in monomer 2 and acceptor Tyr-1310 in monomer 1 is coupled to donor Tyr-108 in monomer 2. Sulfated tyrosines are desulfated during iodination. Post-translationally, undergoes sequential proteolysis by cathepsins to release thyroxine (T4) and triiodothyronine (T3) hormones. In the thyroid follicle lumen, cross-linked TG (storage form) is solubilized by limited proteolysis mediated by cathepsins CTSB and/or CTSL. Partially cleaved TG is further processed by CTSK/cathepsin K and/or CTSL resulting in the release of T4. Following endocytosis, further processing occurs leading to the release of T3 and more T4 hormones. As to expression, specifically expressed in the thyroid gland.

The protein localises to the secreted. Functionally, acts as a substrate for the production of iodinated thyroid hormones thyroxine (T4) and triiodothyronine (T3). The synthesis of T3 and T4 involves iodination of selected tyrosine residues of TG/thyroglobulin followed by their oxidative coupling in the thyroid follicle lumen. Following TG re-internalization and lysosomal-mediated proteolysis, T3 and T4 are released from the polypeptide backbone leading to their secretion into the bloodstream. One dimer produces 7 thyroid hormone molecules. The protein is Thyroglobulin of Homo sapiens (Human).